Here is a 112-residue protein sequence, read N- to C-terminus: MNTVSVVQFLAVGCAVFVLYGRGVFAAEGVKKAGQHKDAELCLGSDGLGHRLDEFWYNDDMCQRFLCFKDDEGIMYEQIANCPIAIAEGDCTLKPGRRATTQTVRPAVESPP.

Residues 1-26 (MNTVSVVQFLAVGCAVFVLYGRGVFA) form the signal peptide.

This sequence belongs to the scoloptoxin-16 family. Post-translationally, contains 2 disulfide bonds. In terms of tissue distribution, expressed by the venom gland.

Its subcellular location is the secreted. This Ethmostigmus rubripes (Giant centipede) protein is U-scoloptoxin(16)-Er5a.